We begin with the raw amino-acid sequence, 378 residues long: Carbazole 1,9a-dioxygenase, terminal oxygenase component CarAa (378 aa).

Residues 29–135 (WYPVRLASEI…VEEAKGLIFV (107 aa)) form the Rieske domain. Positions 69, 71, 90, and 93 each coordinate [2Fe-2S] cluster.

Homotrimer. Carbazole 1,9a-dioxygenase complex consists of a terminal oxygenase component CarAa, a ferredoxin reductase component fdr and a ferredoxin component CarAc. [2Fe-2S] cluster is required as a cofactor.

It carries out the reaction 9H-carbazole + NADH + O2 + H(+) = 2'-aminobiphenyl-2,3-diol + NAD(+). The enzyme catalyses 9H-carbazole + NADPH + O2 + H(+) = 2'-aminobiphenyl-2,3-diol + NADP(+). Functionally, part of the multicomponent carbazole 1,9a-dioxygenase (CARDO), that converts carbazole (CAR) into 2-aminobiphenyl-2,3-diol. Catalyzes the dioxygenation at the angular (C-9a) and adjacent (C-1) positions of carbazole to yield a highly unstable cis-hydrodiol intermediate which is spontaneously converted to 2-aminobiphenyl-2,3-diol. This Sphingomonas sp protein is Carbazole 1,9a-dioxygenase, terminal oxygenase component CarAa (carAa).